We begin with the raw amino-acid sequence, 169 residues long: MILGLALVPSKSFQDEVNAYRKRYDNHYAQIMPHITIKPQFEIDDHDFNLIKNEVKNRISSIKPVEVHATKASNFAPISNVIYFKVAKTESLDQLFNQFNTEDFYGTAEHPFVPHFTIAQGLTSQEFEDIYGQVKLAGVDHREIIEELSLLQYSEEEDKWTIIETFTLG.

His34 serves as the catalytic Proton donor. 2 consecutive short sequence motifs (HXTX) follow at residues 34 to 37 (HITI) and 115 to 118 (HFTI). Residue His115 is the Proton acceptor of the active site.

It belongs to the 2H phosphoesterase superfamily. YjcG family.

The protein is Putative phosphoesterase SERP0604 of Staphylococcus epidermidis (strain ATCC 35984 / DSM 28319 / BCRC 17069 / CCUG 31568 / BM 3577 / RP62A).